Reading from the N-terminus, the 180-residue chain is Ubiquitin-conjugating enzyme E2 20 (180 aa).

The segment at 1–33 (MAAVNGYQGNTPADPPASNGSKQPAAPTKTVDS) is disordered. The UBC core domain maps to 35 to 180 (SVLKRLQSEL…VEKLYKPPSA (146 aa)). Cys-119 functions as the Glycyl thioester intermediate in the catalytic mechanism.

It belongs to the ubiquitin-conjugating enzyme family. As to expression, expressed in all tissues with cell division activities and in mature leaves.

The enzyme catalyses S-ubiquitinyl-[E1 ubiquitin-activating enzyme]-L-cysteine + [E2 ubiquitin-conjugating enzyme]-L-cysteine = [E1 ubiquitin-activating enzyme]-L-cysteine + S-ubiquitinyl-[E2 ubiquitin-conjugating enzyme]-L-cysteine.. The protein operates within protein modification; protein ubiquitination. Accepts the ubiquitin from the E1 complex and catalyzes its covalent attachment to other proteins. The sequence is that of Ubiquitin-conjugating enzyme E2 20 (UBC20) from Arabidopsis thaliana (Mouse-ear cress).